Here is a 301-residue protein sequence, read N- to C-terminus: N-acetylmuramic acid 6-phosphate etherase (301 aa).

The 164-residue stretch at 57-220 (ITEAFKKGGR…TTGAMIRSGK (164 aa)) folds into the SIS domain. Catalysis depends on Glu85, which acts as the Proton donor. Glu116 is an active-site residue.

Belongs to the GCKR-like family. MurNAc-6-P etherase subfamily. As to quaternary structure, homodimer.

The catalysed reaction is N-acetyl-D-muramate 6-phosphate + H2O = N-acetyl-D-glucosamine 6-phosphate + (R)-lactate. Its pathway is amino-sugar metabolism; 1,6-anhydro-N-acetylmuramate degradation. The protein operates within amino-sugar metabolism; N-acetylmuramate degradation. It functions in the pathway cell wall biogenesis; peptidoglycan recycling. In terms of biological role, specifically catalyzes the cleavage of the D-lactyl ether substituent of MurNAc 6-phosphate, producing GlcNAc 6-phosphate and D-lactate. Together with AnmK, is also required for the utilization of anhydro-N-acetylmuramic acid (anhMurNAc) either imported from the medium or derived from its own cell wall murein, and thus plays a role in cell wall recycling. This chain is N-acetylmuramic acid 6-phosphate etherase, found in Photobacterium profundum (strain SS9).